Reading from the N-terminus, the 277-residue chain is Caspase-3 (277 aa).

Position 1 is an N-acetylmethionine (M1). 2 propeptides span residues 1–9 and 10–28; these read MENTENSVD and AKSF…KSMD. K11 carries the N6-acetyllysine modification. A Phosphoserine modification is found at S26. Catalysis depends on residues H121 and C163. C163 carries the S-nitrosocysteine; in inhibited form modification.

This sequence belongs to the peptidase C14A family. In terms of assembly, heterotetramer that consists of two anti-parallel arranged heterodimers, each one formed by a 17 kDa (p17) and a 12 kDa (p12) subunit. Interacts with BIRC6/bruce. Cleavage by granzyme B, caspase-6, caspase-8 and caspase-10 generates the two active subunits. Additional processing of the propeptides is likely due to the autocatalytic activity of the activated protease. Active heterodimers between the small subunit of caspase-7 protease and the large subunit of caspase-3 also occur and vice versa. Post-translationally, S-nitrosylated on its catalytic site cysteine in unstimulated cell lines and denitrosylated upon activation of the Fas apoptotic pathway, associated with an increase in intracellular caspase activity. Fas therefore activates caspase-3 not only by inducing the cleavage of the caspase zymogen to its active subunits, but also by stimulating the denitrosylation of its active site thiol. In terms of processing, ubiquitinated by BIRC6; this activity is inhibited by DIABLO/SMAC.

The protein resides in the cytoplasm. The catalysed reaction is Strict requirement for an Asp residue at positions P1 and P4. It has a preferred cleavage sequence of Asp-Xaa-Xaa-Asp-|- with a hydrophobic amino-acid residue at P2 and a hydrophilic amino-acid residue at P3, although Val or Ala are also accepted at this position.. With respect to regulation, inhibited by BIRC6; following inhibition of BIRC6-caspase binding by DIABLO/SMAC, BIRC6 is subjected to caspase cleavage, leading to an increase in active caspases. Its function is as follows. Involved in the activation cascade of caspases responsible for apoptosis execution. At the onset of apoptosis, it proteolytically cleaves poly(ADP-ribose) polymerase PARP1 at a '216-Asp-|-Gly-217' bond. Cleaves and activates sterol regulatory element binding proteins (SREBPs) between the basic helix-loop-helix leucine zipper domain and the membrane attachment domain. Cleaves and activates caspase-6, -7 and -9 (CASP6, CASP7 and CASP9, respectively). Cleaves and inactivates interleukin-18 (IL18). Triggers cell adhesion in sympathetic neurons through RET cleavage. Cleaves IL-1 beta between an Asp and an Ala, releasing the mature cytokine which is involved in a variety of inflammatory processes. Cleaves and inhibits serine/threonine-protein kinase AKT1 in response to oxidative stress. Acts as an inhibitor of type I interferon production during virus-induced apoptosis by mediating cleavage of antiviral proteins CGAS, IRF3 and MAVS, thereby preventing cytokine overproduction. Also involved in pyroptosis by mediating cleavage and activation of gasdermin-E (GSDME). Cleaves XRCC4 and phospholipid scramblase proteins XKR4, XKR8 and XKR9, leading to promote phosphatidylserine exposure on apoptotic cell surface. Cleaves BIRC6 following inhibition of BIRC6-caspase binding by DIABLO/SMAC. This is Caspase-3 (CASP3) from Canis lupus familiaris (Dog).